A 1069-amino-acid chain; its full sequence is Protogenin B (1069 aa).

The signal sequence occupies residues 1–26 (MGSVRWKTHQQWLIIFWILSFSGVFG). Residues 27 to 936 (FSELWFSIEP…LYHIDEKSMS (910 aa)) are Extracellular-facing. 4 Ig-like domains span residues 30-117 (LWFS…ARLT), 122-208 (LVFS…AELV), 221-308 (PLII…GNVT), and 312-396 (PSLV…SRLI). Cystine bridges form between Cys-51-Cys-100 and Cys-143-Cys-191. N-linked (GlcNAc...) asparagine glycosylation is found at Asn-81, Asn-88, Asn-180, and Asn-229. An intrachain disulfide couples Cys-242 to Cys-290. Residues Asn-299 and Asn-306 are each glycosylated (N-linked (GlcNAc...) asparagine). Positions 317–336 (KPESQTRPRAGTARFSCQAE) are disordered. Cys-333 and Cys-380 form a disulfide bridge. Fibronectin type-III domains are found at residues 406–500 (APRN…TLED), 502–601 (PLRT…TPKT), 608–701 (PAPN…CPST), 711–804 (PPDH…TLLE), and 809–904 (PPES…VKGK). N-linked (GlcNAc...) asparagine glycans are attached at residues Asn-458, Asn-473, and Asn-560. Residues 590–605 (PSAWSSHRTPKTSSAT) are compositionally biased toward polar residues. The segment at 590–609 (PSAWSSHRTPKTSSATVPPA) is disordered. Asn-618, Asn-720, and Asn-834 each carry an N-linked (GlcNAc...) asparagine glycan. Residues 937 to 957 (GIIVGVCIALSCIILCIFILL) form a helical membrane-spanning segment. Residues 958 to 1069 (SKTQTQKSAS…KTVLCYEDEA (112 aa)) lie on the Cytoplasmic side of the membrane.

The protein belongs to the immunoglobulin superfamily. DCC family. Initially expressed in the ventral forebrain and ventral spinal cord. Later, also expressed in the midbrain and in parts of the diencephalon and hindbrain.

Its subcellular location is the membrane. May play a role in anteroposterior axis elongation. The chain is Protogenin B from Danio rerio (Zebrafish).